Consider the following 172-residue polypeptide: Small integral membrane protein 23 (172 aa).

Residues Met-1–Thr-36 lie on the Cytoplasmic side of the membrane. Residues Leu-37–Gly-53 traverse the membrane as a helical; Signal-anchor for type II membrane protein segment. Residues Ser-54 to Leu-172 are Extracellular-facing. A coiled-coil region spans residues Leu-96–Leu-128.

It localises to the cell membrane. The sequence is that of Small integral membrane protein 23 (SMIM23) from Homo sapiens (Human).